A 303-amino-acid chain; its full sequence is uncharacterized protein (303 aa).

The HTH araC/xylS-type domain maps to 183–281; sequence KDILFYLNNN…GCSPSDYRRQ (99 aa). DNA-binding regions (H-T-H motif) lie at residues 200-221 and 248-271; these read EQLS…TKEY and QAEI…LRHV.

This is an uncharacterized protein from Escherichia coli (strain K12).